A 36-amino-acid polypeptide reads, in one-letter code: Pancreatic polypeptide (36 aa).

The residue at position 36 (Tyr36) is a Tyrosine amide.

The protein belongs to the NPY family.

The protein resides in the secreted. In terms of biological role, hormone secreted by pancreatic cells that acts as a regulator of pancreatic and gastrointestinal functions. The chain is Pancreatic polypeptide (PPY) from Struthio camelus (Common ostrich).